The chain runs to 507 residues: Probable Xaa-Pro aminopeptidase HCBG_01484 (507 aa).

Mn(2+)-binding residues include Asp283, Asp294, Glu431, and Glu469.

The protein belongs to the peptidase M24B family. Mn(2+) serves as cofactor.

The enzyme catalyses Release of any N-terminal amino acid, including proline, that is linked to proline, even from a dipeptide or tripeptide.. Catalyzes the removal of a penultimate prolyl residue from the N-termini of peptides. This is Probable Xaa-Pro aminopeptidase HCBG_01484 from Ajellomyces capsulatus (strain G186AR / H82 / ATCC MYA-2454 / RMSCC 2432) (Darling's disease fungus).